Consider the following 846-residue polypeptide: Leucine--tRNA ligase (846 aa).

Residues 47–57 carry the 'HIGH' region motif; it reads PYPSGRIHMGH. A 'KMSKS' region motif is present at residues 621-625; it reads KMSKS. Lysine 624 contacts ATP.

The protein belongs to the class-I aminoacyl-tRNA synthetase family.

It localises to the cytoplasm. The catalysed reaction is tRNA(Leu) + L-leucine + ATP = L-leucyl-tRNA(Leu) + AMP + diphosphate. The sequence is that of Leucine--tRNA ligase from Zymomonas mobilis subsp. mobilis (strain ATCC 31821 / ZM4 / CP4).